The sequence spans 286 residues: Main hemagglutinin component type C (286 aa).

Residues 2 to 55 (SQTNANDLRNNEVFFISPSNNTNKVLDKISQSEVKLWNKLSGANQKWRLIYDTN) form a 1-alpha repeat. Ricin B-type lectin domains follow at residues 12 to 140 (NEVF…FKFS) and 180 to 284 (DSSR…WIIN). One copy of the 1-beta repeat lies at 56 to 100 (KQAYKIKVMDNTSLILTWNAPLSSVSVKTDTNGDNQYWYLLQNYI). A 1-gamma repeat occupies 101 to 148 (SRNVIIRNYMNPNLVLQYNIDDTLMVSTQTSSSNQFFKFSNCIYEALN). Residues 149 to 193 (NRNCKLQTQLNSDRFLSKNLNSQIIVLWQWFDSSRQKWIIEYNET) form a 2-alpha repeat. The interval 167-183 (NLNSQIIVLWQWFDSSR) is sugar-binding site 1. A 2-beta repeat occupies 194-239 (KSAYTLKCQENNRYLTWIQNSNNYVETYQSTDSLIQYWNINYLDND). The 2-gamma repeat unit spans residues 240–286 (ASKYILYNLQDTNRVLDVYNSQIANGTHVIVDSYHGNTNQQWIINLI). The sugar-binding site 2 stretch occupies residues 256-279 (DVYNSQIANGTHVIVDSYHGNTNQ).

As to quaternary structure, botulinum toxins are produced as progenitor toxins of large molecular sizes of 12S (M toxin) and 16S (L toxin). M toxin consists of a non-toxic, non-hemagglutinin component (NTNHA) and the neurotoxin. L toxin consists of the M toxin and the 3 subcomponents of hemagglutinin (HA). HA is composed of subcomponents of 70, 33, and 17 kDa. The 70 kDa subcomponent undergoes proteolytic processing and is split into HA-55 (also called HA-53 and HA3b) and HA-22-23 (also called HA3a). The stoichiometry of the whole complex has been modeled as one BoNT/C, one NTNHA, three HA-70, six HA-33 and three HA-17.

The protein resides in the secreted. Agglutinates human erythrocytes. The hemagglutinin (HA) component of the progenitor toxin protects the structural integrity of botulinum neurotoxin; may increase internalization of the neurotoxin into the bloodstream of the host. The hemagglutinin (HA) component is involved in binding to the upper small intestine through interactions with glycolipids and glycoproteins containing sialic acid moieties. Binds galactose or oligosaccharides with galactose at their non-reducing end. Binds eukaryotic host mucins; binding is inhibited by N-acetyl-beta-neuraminic acid, N-acetyl-D-galactosamine, galactose, and methyl N-acetyl-beta-neuraminic acid. Binds N-acetyl-beta-neuraminic acid, N-acetyl-D-galactosamine and galactose (but not glucose) via 2 sites. The chain is Main hemagglutinin component type C from Clostridium botulinum C (Clostridium botulinum C bacteriophage).